The primary structure comprises 467 residues: MKSFMDENFLLSTDTAKILYHDYAKNKPIFDYHCHLNPREVAENRQFNDLAEIWLEGDHYKWRALRTAGVPEELITGKATNYQKYLAWAKTVPLCIGNPIYHWTHLELRRPFGITNMLFNPQNAEKIWHQCNEMLQQPEFSARGIMQKMNVKLVGTTDDPIDSLQYHQAIKNDESFDIDVVPSWRPDKVFKIELPQFNDYLVQLSEIADVDIYTFADLKKALLKRLEYFDAQGCKSADHGMEIVRFSAIPDESVLNSILQKRLQNQPLLEEEVAQFSTAILVWLASEYCKRHWVMQMHIGAIRNNNSRMFALLGADSGFDSIGDRAYAYPLSRLLDAMDKENQLPKTILYCLNPRDNEMIASMIGNFQGDGIAGKIQFGSGWWFNDQKDGMERQLQQLSQLGLLSQFVGMLTDSRSFLSYTRHEYFRRILCEMIGGWVEKGEAPNDISLLGKMIEDICFNNAKNYFK.

This sequence belongs to the metallo-dependent hydrolases superfamily. Uronate isomerase family.

The catalysed reaction is D-glucuronate = D-fructuronate. It catalyses the reaction aldehydo-D-galacturonate = keto-D-tagaturonate. It functions in the pathway carbohydrate metabolism; pentose and glucuronate interconversion. This Haemophilus influenzae (strain PittGG) protein is Uronate isomerase.